A 311-amino-acid polypeptide reads, in one-letter code: DNA repair and recombination protein RadA (311 aa).

104–111 is an ATP binding site; sequence GEFGSGKS.

The protein belongs to the eukaryotic RecA-like protein family.

Its function is as follows. Involved in DNA repair and in homologous recombination. Binds and assemble on single-stranded DNA to form a nucleoprotein filament. Hydrolyzes ATP in a ssDNA-dependent manner and promotes DNA strand exchange between homologous DNA molecules. This is DNA repair and recombination protein RadA from Methanosphaera stadtmanae (strain ATCC 43021 / DSM 3091 / JCM 11832 / MCB-3).